The sequence spans 134 residues: Early E3B 14.5 kDa protein (134 aa).

Positions 1–21 (MQAMLPVILILLLPCIPLAST) are cleaved as a signal peptide. Residues 54–78 (YWIVIVGIINILSCTFFSITIYPTF) form a helical membrane-spanning segment.

The protein belongs to the adenoviridae E3_14 family. Post-translationally, phosphorylated on serine; O-glycosylated, but not N-glycosylated.

It is found in the host membrane. Down-regulates the EGF receptor and prevents cytolysis by TNF. This Homo sapiens (Human) protein is Early E3B 14.5 kDa protein.